Consider the following 446-residue polypeptide: Argininosuccinate lyase (446 aa).

It belongs to the lyase 1 family. Argininosuccinate lyase subfamily.

Its subcellular location is the cytoplasm. The catalysed reaction is 2-(N(omega)-L-arginino)succinate = fumarate + L-arginine. It functions in the pathway amino-acid biosynthesis; L-arginine biosynthesis; L-arginine from L-ornithine and carbamoyl phosphate: step 3/3. The protein is Argininosuccinate lyase of Parabacteroides distasonis (strain ATCC 8503 / DSM 20701 / CIP 104284 / JCM 5825 / NCTC 11152).